A 181-amino-acid polypeptide reads, in one-letter code: uncharacterized protein (181 aa).

Positions 25 to 47 are disordered; the sequence is ELANEVSAGDEEPYDDDIWESED. Residues 32–47 show a composition bias toward acidic residues; it reads AGDEEPYDDDIWESED. The helical transmembrane segment at 149-169 threads the bilayer; that stretch reads ILTLILLSCGLLMLFIGYPIL.

The protein resides in the cytoplasm. The protein localises to the membrane. This is an uncharacterized protein from Schizosaccharomyces pombe (strain 972 / ATCC 24843) (Fission yeast).